We begin with the raw amino-acid sequence, 212 residues long: Agamous-like MADS-box protein MADS9 (212 aa).

An MADS-box domain is found at 1–61 (MGRGKIEIKR…GKMHEYCSPS (61 aa)). The 87-residue stretch at 84–170 (HENLNNELDR…NYIVHHQGMP (87 aa)) folds into the K-box domain.

In terms of tissue distribution, expressed during flower development in stamens and petals.

Its subcellular location is the nucleus. Its function is as follows. Probable transcription factor that may play role in specifying stamen and petal organ identity. This is Agamous-like MADS-box protein MADS9 from Vitis vinifera (Grape).